Here is a 346-residue protein sequence, read N- to C-terminus: Probable aldo-keto reductase 2 (346 aa).

Tyrosine 63 serves as the catalytic Proton donor. Histidine 131 is a binding site for substrate. 210 to 220 (SPLGRGFLAAG) contacts NADP(+).

It belongs to the aldo/keto reductase family. Aldo/keto reductase 13 subfamily.

This is Probable aldo-keto reductase 2 (AGD2) from Arabidopsis thaliana (Mouse-ear cress).